The primary structure comprises 240 residues: Ribonuclease HII (240 aa).

The RNase H type-2 domain occupies 27–226; the sequence is GPVAGVDEAG…REARSLRLED (200 aa). A divalent metal cation-binding residues include Asp-33, Glu-34, and Asp-127.

Belongs to the RNase HII family. It depends on Mn(2+) as a cofactor. The cofactor is Mg(2+).

The protein resides in the cytoplasm. It carries out the reaction Endonucleolytic cleavage to 5'-phosphomonoester.. Endonuclease that specifically degrades the RNA of RNA-DNA hybrids. The chain is Ribonuclease HII from Frankia casuarinae (strain DSM 45818 / CECT 9043 / HFP020203 / CcI3).